Here is a 303-residue protein sequence, read N- to C-terminus: MTAGQPLRDDPQPRRHSPPALHPAVVPAYPPPESDADESWVWSQIKAEARRDADAEPALASFLYATVLSHPSLDRSLAFHLANKLCSSTLLSTLLYDLFVASLAAHPTLRAAVVADLLAARSRDPACVGFSHCLLNYKGFLAIQAQRVAHVLWAQDRRALALALQSRVAEVFAVDIHPAAAIGKGVLLDHATGVVIGETAVIGDNVSILHHVTLGGTGKAVGDRHPKIGDGVLIGAGATILGNVRIGAGAKIGAGSLVLIDVPPRTTAVGNPARLLGGKKGDDMPGESMDHTSFIQQWSDYSI.

Disordered stretches follow at residues 1–36 (MTAGQPLRDDPQPRRHSPPALHPAVVPAYPPPESDA) and 271–290 (NPARLLGGKKGDDMPGESMD).

It belongs to the transferase hexapeptide repeat family. Homomultimer.

The enzyme catalyses L-serine + acetyl-CoA = O-acetyl-L-serine + CoA. It participates in amino-acid biosynthesis; L-cysteine biosynthesis; L-cysteine from L-serine: step 1/2. This Oryza sativa subsp. japonica (Rice) protein is Probable serine acetyltransferase 1 (SAT1).